The primary structure comprises 877 residues: G-protein coupled receptor family C group 6 member A (877 aa).

An N-terminal signal peptide occupies residues 1–24 (MAGLDLSLVLMLSVLAGVREVSLT). The Extracellular portion of the chain corresponds to 25 to 567 (QVNQQGVIAP…EYFEWNSGFA (543 aa)). Residues asparagine 53, asparagine 99, asparagine 135, asparagine 263, asparagine 310, asparagine 322, asparagine 338, and asparagine 358 are each glycosylated (N-linked (GlcNAc...) asparagine). Residue aspartate 388 participates in L-lysine binding. 5 N-linked (GlcNAc...) asparagine glycosylation sites follow: asparagine 430, asparagine 475, asparagine 484, asparagine 528, and asparagine 548. A helical membrane pass occupies residues 568–588 (IALLTLAALGILLLISMSALF). The Cytoplasmic segment spans residues 589 to 603 (FWQRNSLVVKAAGGP). Residues 604-624 (LCHLILFSLLGSFISVIFFVG) form a helical membrane-spanning segment. The Extracellular segment spans residues 625-635 (EPSNESCRVRQ). Asparagine 628 carries an N-linked (GlcNAc...) asparagine glycan. Residues 636–656 (VIFGLSFTLCVSCILVKSLKI) form a helical membrane-spanning segment. Topologically, residues 657 to 676 (LLAFQMNLELKELLRKLYKP) are cytoplasmic. The chain crosses the membrane as a helical span at residues 677 to 697 (YVIVCMCMGLQVTICTLWLTL). Topologically, residues 698–720 (HRPFIEKVVQPKSILLECNEGSD) are extracellular. The helical transmembrane segment at 721–741 (LMFGLMLGYIVLLALICFTFA) threads the bilayer. The Cytoplasmic portion of the chain corresponds to 742 to 755 (YKGRKLPQKYNEAK). A helical membrane pass occupies residues 756 to 776 (FITFGMLIYLMAWVIFIPVHV). Over 777–782 (TTSGKY) the chain is Extracellular. A helical transmembrane segment spans residues 783–803 (VPAVEVVVILISNYGILSCHF). The Cytoplasmic segment spans residues 804–877 (LPKCYIIIFK…VSVPEIDNVL (74 aa)).

It belongs to the G-protein coupled receptor 3 family. In terms of assembly, homodimer; disulfide-linked. As to expression, expressed in olfactory epithelium. Also expressed in gills, tongue, lips and palatal organ. Not expressed in brain, kidney, liver, muscle, intestine, ovary and skin. In olfactory epithelium, it is widely expressed over the apical and medial portions of the olfactory sensory neurons, regions that contain olfactory neurons. Expressed in external epithelia, which contains taste buds and solitary chemosensory cells. On gill rakers, it is widely expressed in the surface epithelium, but excluded from taste buds.

Its subcellular location is the cell membrane. In terms of biological role, olfactory receptor that is activated by amino acids that act as potent odorants in fish. Most highly activated by basic amino acids such as L-lysine and L-arginine. The polypeptide is G-protein coupled receptor family C group 6 member A (gprc6a) (Carassius auratus (Goldfish)).